Here is a 142-residue protein sequence, read N- to C-terminus: Large ribosomal subunit protein uL11 (142 aa).

The protein belongs to the universal ribosomal protein uL11 family. Part of the ribosomal stalk of the 50S ribosomal subunit. Interacts with L10 and the large rRNA to form the base of the stalk. L10 forms an elongated spine to which L12 dimers bind in a sequential fashion forming a multimeric L10(L12)X complex. One or more lysine residues are methylated.

Its function is as follows. Forms part of the ribosomal stalk which helps the ribosome interact with GTP-bound translation factors. The polypeptide is Large ribosomal subunit protein uL11 (Haemophilus influenzae (strain 86-028NP)).